The primary structure comprises 241 residues: Small ribosomal subunit protein uS10m (241 aa).

A mitochondrion-targeting transit peptide spans 1–54 (MIAGVLRRSSLPSRQTLSAALASFNSCISHNLTPATTGASVSSRFTLASSPNSF).

This sequence belongs to the universal ribosomal protein uS10 family. Component of the mitochondrial ribosome small subunit.

It is found in the mitochondrion. The sequence is that of Small ribosomal subunit protein uS10m (RPS10) from Arabidopsis thaliana (Mouse-ear cress).